We begin with the raw amino-acid sequence, 75 residues long: Guanine nucleotide-binding protein G(I)/G(S)/G(O) subunit gamma-4 (75 aa).

Cys72 bears the Cysteine methyl ester mark. Cys72 carries S-geranylgeranyl cysteine lipidation. Residues 73-75 constitute a propeptide, removed in mature form; that stretch reads TIL.

This sequence belongs to the G protein gamma family. G proteins are composed of 3 units, alpha, beta and gamma. Interacts with beta-1 and beta-2, but not with beta-3. Interacts with KCNK1. Interacts (via C-terminus) with KCNK2/TREK-1 (via N-terminus); this interaction confers ion selectivity to Cl(-) and L-glutamate. In terms of tissue distribution, brain.

The protein localises to the cell membrane. In terms of biological role, guanine nucleotide-binding proteins (G proteins) are involved as a modulator or transducer in various transmembrane signaling systems. The beta and gamma chains are required for the GTPase activity, for replacement of GDP by GTP, and for G protein-effector interaction. The sequence is that of Guanine nucleotide-binding protein G(I)/G(S)/G(O) subunit gamma-4 (Gng4) from Mus musculus (Mouse).